Reading from the N-terminus, the 3584-residue chain is D-lysergyl-peptide-synthetase subunit 1 (3584 aa).

The segment at 25–44 (IESINGDKNKSERHTASSSA) is disordered. Basic and acidic residues predominate over residues 29-39 (NGDKNKSERHT). The adenylation (A) domain 1 stretch occupies residues 307–706 (SCCSRPNSQA…LGRKDDQVKI (400 aa)). One can recognise a Carrier 1 domain in the interval 848 to 917 (REKLLQALFA…TLREIVIVST (70 aa)). O-(pantetheine 4'-phosphoryl)serine is present on S880. Positions 962-1353 (EDIYPCTHLQ…EHILTQIHSN (392 aa)) are condensation (C) domain 1. Residues 1396-1803 (QAKCQAQPDA…RRKDAQVKIR (408 aa)) are adenylation (A) domain 2. The Carrier 2 domain occupies 1948-2016 (TEHEISAIWA…TIRKLALARG (69 aa)). S1980 is modified (O-(pantetheine 4'-phosphoryl)serine). Positions 2066 to 2483 (ERIYPCSPIQ…ALPVLDEDQM (418 aa)) are condensation (C) domain 2. The adenylation (A) domain 3 stretch occupies residues 2508–2906 (QCIRCPDSPS…GRNDDQVKVR (399 aa)). Positions 3041-3109 (MEAELQQLVG…RLSDLARIVE (69 aa)) constitute a Carrier 3 domain. S3073 is subject to O-(pantetheine 4'-phosphoryl)serine. A cyclization (Cyc) domain region spans residues 3174–3472 (LYFSKPMASE…VAKSTTWSSD (299 aa)).

Belongs to the NRP synthetase family.

The protein operates within alkaloid biosynthesis; ergot alkaloid biosynthesis. D-lysergyl-peptide-synthetase subunit 1; part of the gene cluster that mediates the biosynthesis of fungal ergot alkaloid. DmaW catalyzes the first step of ergot alkaloid biosynthesis by condensing dimethylallyl diphosphate (DMAP) and tryptophan to form 4-dimethylallyl-L-tryptophan. The second step is catalyzed by the methyltransferase easF that methylates 4-dimethylallyl-L-tryptophan in the presence of S-adenosyl-L-methionine, resulting in the formation of 4-dimethylallyl-L-abrine. The catalase easC and the FAD-dependent oxidoreductase easE then transform 4-dimethylallyl-L-abrine to chanoclavine-I which is further oxidized by easD in the presence of NAD(+), resulting in the formation of chanoclavine-I aldehyde. Agroclavine dehydrogenase easG then mediates the conversion of chanoclavine-I aldehyde to agroclavine via a non-enzymatic adduct reaction: the substrate is an iminium intermediate that is formed spontaneously from chanoclavine-I aldehyde in the presence of glutathione. The presence of easA is not required to complete this reaction. Further conversion of agroclavine to paspalic acid is a two-step process involving oxidation of agroclavine to elymoclavine and of elymoclavine to paspalic acid, the second step being performed by the elymoclavine oxidase cloA. Paspalic acid is then further converted to D-lysergic acid. Ergopeptines are assembled from D-lysergic acid and three different amino acids by the D-lysergyl-peptide-synthetases composed each of a monomudular and a trimodular nonribosomal peptide synthetase subunit. LpsB and lpsC encode the monomodular subunits responsible for D-lysergic acid activation and incorporation into the ergopeptine backbone. LpsA1 and A2 subunits encode the trimodular nonribosomal peptide synthetase assembling the tripeptide portion of ergopeptines. LpsA1 is responsible for formation of the major ergopeptine, ergotamine, and lpsA2 for alpha-ergocryptine, the minor ergopeptine of the total alkaloid mixture elaborated by C.purpurea. D-lysergyl-tripeptides are assembled by the nonribosomal peptide synthetases and released as N-(D-lysergyl-aminoacyl)-lactams. Cyclolization of the D-lysergyl-tripeptides is performed by the Fe(2+)/2-ketoglutarate-dependent dioxygenase easH which introduces a hydroxyl group into N-(D-lysergyl-aminoacyl)-lactam at alpha-C of the aminoacyl residue followed by spontaneous condensation with the terminal lactam carbonyl group. The protein is D-lysergyl-peptide-synthetase subunit 1 of Claviceps purpurea (strain 20.1) (Ergot fungus).